The chain runs to 146 residues: Universal stress protein A homolog 2 (146 aa).

Belongs to the universal stress protein A family. Homodimer.

The protein resides in the cytoplasm. Functionally, involved in stress response. The chain is Universal stress protein A homolog 2 (uspA2) from Coxiella burnetii (strain RSA 493 / Nine Mile phase I).